The chain runs to 506 residues: Pisatin demethylase (506 aa).

Cys-453 is a heme binding site.

This sequence belongs to the cytochrome P450 family. Requires heme as cofactor.

Can detoxify the phytoalexin pisatin from garden pea. Pisatin is an antimicrobial compound produced by pea in response to infection by plant pathogens. This Fusarium vanettenii (Neocosmospora pisi) protein is Pisatin demethylase (PDA6-1).